We begin with the raw amino-acid sequence, 439 residues long: ATP-dependent RNA helicase RhlB (439 aa).

The short motif at Gln9 to Ala37 is the Q motif element. The 180-residue stretch at Leu40–Val219 folds into the Helicase ATP-binding domain. Position 53–60 (Ala53–Thr60) interacts with ATP. The DEAD box motif lies at Asp165–Asp168. One can recognise a Helicase C-terminal domain in the interval Lys243–Ile390. The tract at residues Pro394–Ser439 is disordered. Residues Ser415–Arg428 show a composition bias toward low complexity. Over residues Pro429–Ser439 the composition is skewed to basic residues.

This sequence belongs to the DEAD box helicase family. RhlB subfamily. In terms of assembly, component of the RNA degradosome, which is a multiprotein complex involved in RNA processing and mRNA degradation.

The protein resides in the cytoplasm. The enzyme catalyses ATP + H2O = ADP + phosphate + H(+). In terms of biological role, DEAD-box RNA helicase involved in RNA degradation. Has RNA-dependent ATPase activity and unwinds double-stranded RNA. The chain is ATP-dependent RNA helicase RhlB from Shewanella amazonensis (strain ATCC BAA-1098 / SB2B).